The primary structure comprises 81 residues: ATP synthase subunit c, chloroplastic (81 aa).

2 consecutive transmembrane segments (helical) span residues 3–23 (PLIPAASVIAAGLAVGLASIG) and 57–77 (LAFMEALTIYGLVVALALLFA).

This sequence belongs to the ATPase C chain family. As to quaternary structure, F-type ATPases have 2 components, F(1) - the catalytic core - and F(0) - the membrane proton channel. F(1) has five subunits: alpha(3), beta(3), gamma(1), delta(1), epsilon(1). F(0) has four main subunits: a(1), b(1), b'(1) and c(10-14). The alpha and beta chains form an alternating ring which encloses part of the gamma chain. F(1) is attached to F(0) by a central stalk formed by the gamma and epsilon chains, while a peripheral stalk is formed by the delta, b and b' chains.

The protein resides in the plastid. It is found in the chloroplast thylakoid membrane. Functionally, f(1)F(0) ATP synthase produces ATP from ADP in the presence of a proton or sodium gradient. F-type ATPases consist of two structural domains, F(1) containing the extramembraneous catalytic core and F(0) containing the membrane proton channel, linked together by a central stalk and a peripheral stalk. During catalysis, ATP synthesis in the catalytic domain of F(1) is coupled via a rotary mechanism of the central stalk subunits to proton translocation. Key component of the F(0) channel; it plays a direct role in translocation across the membrane. A homomeric c-ring of between 10-14 subunits forms the central stalk rotor element with the F(1) delta and epsilon subunits. In Cycas taitungensis (Prince sago), this protein is ATP synthase subunit c, chloroplastic.